A 686-amino-acid polypeptide reads, in one-letter code: Leucine-rich repeat-containing protein 49 (686 aa).

LRR repeat units lie at residues 113–134 (HLRL…SNLQ), 135–156 (KLIS…STLR), 157–178 (CLRV…ENLK), 179–200 (SLDV…NHLC), 201–222 (ELRV…NGLD), 223–244 (SLTE…DNLP), and 245–266 (CLQH…SCLA). The LRRCT domain occupies 279–317 (NPIAQESWYKHTVLQNMMQLRQLDMKRITEEERRMASVL). Residues 303-341 (MKRITEEERRMASVLAKKEEEKKRESHKQSLLKEKKRLT) adopt a coiled-coil conformation. The segment at 360–388 (ATNEDRKDSDSPQDPCQIDGSTLSAFPEE) is disordered.

Part of the neuronal tubulin polyglutamylase complex which contains TPGS1, TPGS2, TTLL1, LRRC49 and NICN1. Interacts with PCM1; TTLL1, TPGS1, TPGS2 and LRRC49.

Its subcellular location is the cytoplasm. The protein localises to the cytoskeleton. The protein resides in the microtubule organizing center. It localises to the centrosome. It is found in the centriolar satellite. Functionally, subunit of the tubulin polyglutamylase complex (TPGC). The complex mediates cilia and flagella polyglutamylation which is essential for their biogenesis and motility. The protein is Leucine-rich repeat-containing protein 49 of Homo sapiens (Human).